Reading from the N-terminus, the 168-residue chain is Phosphopantetheine adenylyltransferase (168 aa).

Position 9 (Thr9) interacts with substrate. ATP contacts are provided by residues 9 to 10 and His17; that span reads TF. Lys41, Leu73, and Arg87 together coordinate substrate. ATP-binding positions include 88 to 90, Glu98, and 123 to 129; these read GLR and YQFISGT.

Belongs to the bacterial CoaD family. Homohexamer. Mg(2+) serves as cofactor.

It localises to the cytoplasm. It catalyses the reaction (R)-4'-phosphopantetheine + ATP + H(+) = 3'-dephospho-CoA + diphosphate. Its pathway is cofactor biosynthesis; coenzyme A biosynthesis; CoA from (R)-pantothenate: step 4/5. Its function is as follows. Reversibly transfers an adenylyl group from ATP to 4'-phosphopantetheine, yielding dephospho-CoA (dPCoA) and pyrophosphate. This is Phosphopantetheine adenylyltransferase from Ralstonia nicotianae (strain ATCC BAA-1114 / GMI1000) (Ralstonia solanacearum).